We begin with the raw amino-acid sequence, 382 residues long: 8-amino-7-oxononanoate synthase (382 aa).

R26 is a substrate binding site. 104–105 (GY) provides a ligand contact to pyridoxal 5'-phosphate. Substrate is bound at residue H129. Residues S175, 200–203 (DEAH), and 232–235 (TLSK) each bind pyridoxal 5'-phosphate. Residue K235 is modified to N6-(pyridoxal phosphate)lysine. Substrate is bound at residue T345.

The protein belongs to the class-II pyridoxal-phosphate-dependent aminotransferase family. BioF subfamily. In terms of assembly, homodimer. Pyridoxal 5'-phosphate is required as a cofactor.

The catalysed reaction is 6-carboxyhexanoyl-[ACP] + L-alanine + H(+) = (8S)-8-amino-7-oxononanoate + holo-[ACP] + CO2. It functions in the pathway cofactor biosynthesis; biotin biosynthesis. Functionally, catalyzes the decarboxylative condensation of pimeloyl-[acyl-carrier protein] and L-alanine to produce 8-amino-7-oxononanoate (AON), [acyl-carrier protein], and carbon dioxide. This is 8-amino-7-oxononanoate synthase from Mycobacterium sp. (strain JLS).